We begin with the raw amino-acid sequence, 190 residues long: Protein GrpE (190 aa).

Disordered regions lie at residues 1–22 (MAEETNQSLEDQNVQVEEGQTI) and 170–190 (EEGESKQSIRPARVKVGKPQS). Residues 181–190 (ARVKVGKPQS) show a composition bias toward basic residues.

Belongs to the GrpE family. In terms of assembly, homodimer.

The protein localises to the cytoplasm. Functionally, participates actively in the response to hyperosmotic and heat shock by preventing the aggregation of stress-denatured proteins, in association with DnaK and GrpE. It is the nucleotide exchange factor for DnaK and may function as a thermosensor. Unfolded proteins bind initially to DnaJ; upon interaction with the DnaJ-bound protein, DnaK hydrolyzes its bound ATP, resulting in the formation of a stable complex. GrpE releases ADP from DnaK; ATP binding to DnaK triggers the release of the substrate protein, thus completing the reaction cycle. Several rounds of ATP-dependent interactions between DnaJ, DnaK and GrpE are required for fully efficient folding. This Leptospira biflexa serovar Patoc (strain Patoc 1 / Ames) protein is Protein GrpE.